The chain runs to 118 residues: Thioredoxin H-type (118 aa).

The 113-residue stretch at 2 to 114 folds into the Thioredoxin domain; sequence AAEEGQVIGC…LQQTIAKHMA (113 aa). Catalysis depends on nucleophile residues Cys40 and Cys43. Cys40 and Cys43 form a disulfide bridge.

The protein belongs to the thioredoxin family. Plant H-type subfamily.

The protein localises to the cytoplasm. Participates in various redox reactions through the reversible oxidation of the active center dithiol to a disulfide. The H form is known to activate a number of cytosolic enzymes. This chain is Thioredoxin H-type, found in Ricinus communis (Castor bean).